The primary structure comprises 143 residues: Large ribosomal subunit protein uL11 (143 aa).

The protein belongs to the universal ribosomal protein uL11 family. Part of the ribosomal stalk of the 50S ribosomal subunit. Interacts with L10 and the large rRNA to form the base of the stalk. L10 forms an elongated spine to which L12 dimers bind in a sequential fashion forming a multimeric L10(L12)X complex. In terms of processing, one or more lysine residues are methylated.

Functionally, forms part of the ribosomal stalk which helps the ribosome interact with GTP-bound translation factors. This is Large ribosomal subunit protein uL11 from Halorhodospira halophila (strain DSM 244 / SL1) (Ectothiorhodospira halophila (strain DSM 244 / SL1)).